The sequence spans 330 residues: ADP-L-glycero-D-manno-heptose-6-epimerase (330 aa).

NADP(+) contacts are provided by residues 11–12 (FI), 32–33 (DN), lysine 39, lysine 54, 75–79 (EGACS), and asparagine 92. Tyrosine 139 (proton acceptor) is an active-site residue. Lysine 143 contacts NADP(+). Asparagine 168 is a binding site for substrate. NADP(+)-binding residues include valine 169 and lysine 177. The active-site Proton acceptor is the lysine 177. Substrate-binding positions include arginine 179, histidine 186, 200–203 (FGEY), arginine 213, and tyrosine 292.

It belongs to the NAD(P)-dependent epimerase/dehydratase family. HldD subfamily. In terms of assembly, homopentamer. NADP(+) is required as a cofactor.

It catalyses the reaction ADP-D-glycero-beta-D-manno-heptose = ADP-L-glycero-beta-D-manno-heptose. It functions in the pathway nucleotide-sugar biosynthesis; ADP-L-glycero-beta-D-manno-heptose biosynthesis; ADP-L-glycero-beta-D-manno-heptose from D-glycero-beta-D-manno-heptose 7-phosphate: step 4/4. Functionally, catalyzes the interconversion between ADP-D-glycero-beta-D-manno-heptose and ADP-L-glycero-beta-D-manno-heptose via an epimerization at carbon 6 of the heptose. The chain is ADP-L-glycero-D-manno-heptose-6-epimerase from Burkholderia ambifaria (strain ATCC BAA-244 / DSM 16087 / CCUG 44356 / LMG 19182 / AMMD) (Burkholderia cepacia (strain AMMD)).